Reading from the N-terminus, the 74-residue chain is Large ribosomal subunit protein bL31 (74 aa).

Cys16, Cys18, Cys38, and Cys41 together coordinate Zn(2+).

The protein belongs to the bacterial ribosomal protein bL31 family. Type A subfamily. Part of the 50S ribosomal subunit. The cofactor is Zn(2+).

Functionally, binds the 23S rRNA. The sequence is that of Large ribosomal subunit protein bL31 from Salinispora tropica (strain ATCC BAA-916 / DSM 44818 / JCM 13857 / NBRC 105044 / CNB-440).